A 186-amino-acid chain; its full sequence is Testis-expressed protein 29 (186 aa).

Residues 1-56 lie on the Extracellular side of the membrane; the sequence is MKDTKEIKRSPPHLLKKFAVCDIPLYDICDYNVTRERCRSLDCCFYRGVCYEKAVP. The helical transmembrane segment at 57 to 77 threads the bilayer; the sequence is IYVQVFFTLIWFVAGAFIIAV. At 78–151 the chain is on the cytoplasmic side; the sequence is IYRVIQGTKK…AGCCLWMKSK (74 aa). Disordered regions lie at residues 104–138 and 151–186; these read SPTP…KTES and KPAK…QAAP. Positions 108-133 are enriched in pro residues; it reads ELIPEPIPEPIPEPIPEPIREPPPPV.

It localises to the membrane. The sequence is that of Testis-expressed protein 29 (Tex29) from Mus musculus (Mouse).